The primary structure comprises 413 residues: RNA-binding protein 41 (413 aa).

Residues 225-247 (SGSGTAEKPSLLQDKGKQAAQGK) are disordered. The RRM domain maps to 309–387 (KVLYLKNLSP…KILVIEFAKS (79 aa)).

Its function is as follows. May bind RNA. In Mus musculus (Mouse), this protein is RNA-binding protein 41 (Rbm41).